A 632-amino-acid polypeptide reads, in one-letter code: MKLFLYHFTFIVYYFIISFSYAFSIKQEIIVSSHNASSILNTTAFWFVEFTESKYDKEEFSVIWNEVSMEFPDIRRAKVFCDLDLEFCAQQEIYDHPKVVVLKNGMWMRHVLEKNQITTKSARQFVKSHLGNCDLEQAENETDCFSDDGEYNSDSSSTDPAFELKEDQSWKHSSILRPLETLNFKRFLFGNEIMSKTRAFVMFVSLKHCEDCFHWEAVWSSITRNTDERLKMAQVNCDEEKEMCNHFHIKKFPTFRVFQGFDSIQYNGPLKYQQLLSYSNQVASYQAIKIEEGDIESIENSHPVFFLVLYDFATTSEDFSIIERLKLQLAGVAPLYICNSKALANKYGAQSQPSIIAVRNGMPIVYQAITPREFRDYKRITEWINIVSSPFITELTPTKCHSLLNRKLTVLTLLQPDSEQFFSSQEELLRLGKRWFRFQMQRQRNDIVWSRIKKYSAIAEAKKKGFARKVKRIKYSKISHPTYTESVSFLWLDSSLWLDWIVENLDHTVYVDSITPPVFVIDHSKGVIYVSDRNGNSLTLEEDSLFSTLRIILEHPNSSRLQKLRAPGLCPNGSPNYRNRYKLIVFNLLIALLILSILTIISASRLSRRRRQLLNKQPVFGFYHSLVIAKSD.

Positions methionine 1–alanine 22 are cleaved as a signal peptide. N-linked (GlcNAc...) asparagine glycosylation is found at asparagine 35, asparagine 41, and asparagine 140. In terms of domain architecture, Thioredoxin spans serine 153–serine 284. Cysteines 209 and 212 form a disulfide. The N-linked (GlcNAc...) asparagine glycan is linked to asparagine 557. The chain crosses the membrane as a helical span at residues leucine 583–alanine 603.

This sequence belongs to the protein disulfide isomerase family.

The protein resides in the endoplasmic reticulum membrane. It catalyses the reaction Catalyzes the rearrangement of -S-S- bonds in proteins.. Functionally, acts as a membrane-bound chaperone in endoplasmic reticulum quality control. Probably facilitates presentation of substrate to membrane-bound components of the degradation machinery. The protein is Thioredoxin domain-containing protein C959.05c of Schizosaccharomyces pombe (strain 972 / ATCC 24843) (Fission yeast).